The following is a 247-amino-acid chain: Adenosine 5'-phosphosulfate reductase (247 aa).

Residues Cys-133, Cys-134, Cys-216, and Cys-219 each contribute to the [4Fe-4S] cluster site. Residues 222-247 (KPAPGSDPRSGRWAGASKTECGLHAS) are disordered. Cys-242 acts as the Nucleophile; cysteine thiosulfonate intermediate in catalysis.

Belongs to the PAPS reductase family. CysH subfamily. [4Fe-4S] cluster serves as cofactor.

The protein resides in the cytoplasm. It catalyses the reaction [thioredoxin]-disulfide + sulfite + AMP + 2 H(+) = adenosine 5'-phosphosulfate + [thioredoxin]-dithiol. It functions in the pathway sulfur metabolism; hydrogen sulfide biosynthesis; sulfite from sulfate. Its function is as follows. Catalyzes the formation of sulfite from adenosine 5'-phosphosulfate (APS) using thioredoxin as an electron donor. This Rhodococcus erythropolis (strain PR4 / NBRC 100887) protein is Adenosine 5'-phosphosulfate reductase.